The chain runs to 277 residues: Phosphoenolpyruvate synthase regulatory protein (277 aa).

An ADP-binding site is contributed by 157–164 (GVSRCGKT).

Belongs to the pyruvate, phosphate/water dikinase regulatory protein family. PSRP subfamily.

It catalyses the reaction [pyruvate, water dikinase] + ADP = [pyruvate, water dikinase]-phosphate + AMP + H(+). The enzyme catalyses [pyruvate, water dikinase]-phosphate + phosphate + H(+) = [pyruvate, water dikinase] + diphosphate. In terms of biological role, bifunctional serine/threonine kinase and phosphorylase involved in the regulation of the phosphoenolpyruvate synthase (PEPS) by catalyzing its phosphorylation/dephosphorylation. The polypeptide is Phosphoenolpyruvate synthase regulatory protein (Salmonella gallinarum (strain 287/91 / NCTC 13346)).